The following is a 468-amino-acid chain: Histone acetyltransferase type B catalytic subunit (468 aa).

Residue Ser8 is modified to Phosphoserine. 2 interaction with histone H4 N-terminus regions span residues 44–46 (EEE) and 208–210 (YKF). Acetyl-CoA is bound by residues 248–250 (FLI) and 255–261 (QKSGNGS). Catalysis depends on Glu283, which acts as the Proton donor/acceptor. Residues 442 to 468 (SSNLKRKLDDDENTEGSSSKKARVEDA) form a disordered region.

This sequence belongs to the HAT1 family. As to quaternary structure, component of the HAT-B complex composed of at least HAT1 and HAT2. The HAT-B complex binds to histone H4 tail. In the nucleus, interacts with GSK1 and SSB1. In the cytoplasm, interacts with ATG3 and ATG9. In terms of processing, phosphorylated at Ser-8 by GSK1 in the nucleus which impairs its translocation to the cytoplasm through interfering the interaction between HAT1 and SSB1. Dephosphorylation under nutrient starvation conditions promotes the interaction between HAT1 and SSB1 and results in the translocation of HAT1 from the nucleus to the cytoplasm in order to acetylate ATG3 and ATG9.

It is found in the nucleus. The protein localises to the cytoplasm. Its subcellular location is the preautophagosomal structure. It catalyses the reaction L-lysyl-[protein] + acetyl-CoA = N(6)-acetyl-L-lysyl-[protein] + CoA + H(+). Its function is as follows. Catalytic component of the histone acetylase B (HAT-B) complex. Has intrinsic substrate specificity that modifies lysine in recognition sequence GXGKXG. Involved in DNA double-strand break repair. Required for appressorium turgor pressure, autophagy and conidial nuclear degradation. During the germination process and upon starvation conditions, translocates from the nucleus to the cytoplasm where it acetylates ATG3 at 'lys-262' and 'Lys-267', thus influencing autophagy through controlling ATG3-ATG8 interaction. Also acetylates ATG9 at 'Lys-621' to regulate ATG9 binding to vesicles, which is also important for autophagy and pathogenicity. This Pyricularia oryzae (strain 70-15 / ATCC MYA-4617 / FGSC 8958) (Rice blast fungus) protein is Histone acetyltransferase type B catalytic subunit.